Consider the following 332-residue polypeptide: Transcription factor HBP-1b(c38) (332 aa).

The interval 1 to 48 (MAEASPRTETSTDDTDENLMLEPGNAALAVVSDSSDRSRDKNGDQKTM) is disordered. Basic and acidic residues predominate over residues 34–47 (SSDRSRDKNGDQKT). Positions 44–107 (DQKTMRRLAQ…SSADQSHSMS (64 aa)) constitute a bZIP domain. Positions 46 to 66 (KTMRRLAQNREAARKSRLRKK) are basic motif. A coiled-coil region spans residues 47–142 (TMRRLAQNRE…RAAVNAHAGD (96 aa)). The tract at residues 72–86 (LENSRLKLTQLEQEL) is leucine-zipper. Positions 111 to 329 (ALAFDTEYAR…RALSSLWLAR (219 aa)) constitute a DOG1 domain.

It belongs to the bZIP family. As to quaternary structure, binds DNA as a dimer.

It is found in the nucleus. In terms of biological role, transcriptional activator that binds specifically to the DNA sequence 5'-TGACG-3'. Recognizes ocs elements like the as-1 motif of the cauliflower mosaic virus 35S promoter. Binding to the as-1-like cis elements mediate auxin- and salicylic acid-inducible transcription. Binds to the hexamer motif 5'-ACGTCA-3' of histone gene promoters. In Triticum aestivum (Wheat), this protein is Transcription factor HBP-1b(c38).